The sequence spans 661 residues: Peroxisomal acyl-coenzyme A oxidase 1 (661 aa).

An N6-succinyllysine mark is found at Lys89 and Lys90. Thr139 serves as a coordination point for FAD. Lys159 is modified (N6-succinyllysine). Residue Gly178 coordinates FAD. An N6-acetyllysine modification is found at Lys216. N6-succinyllysine is present on Lys241. 3 positions are modified to N6-acetyllysine: Lys255, Lys267, and Lys272. N6-succinyllysine is present on Lys349. Glu421 functions as the Proton acceptor in the catalytic mechanism. 4 positions are modified to N6-acetyllysine; alternate: Lys437, Lys446, Lys512, and Lys637. 4 positions are modified to N6-succinyllysine; alternate: Lys437, Lys446, Lys512, and Lys637. At Lys643 the chain carries N6-succinyllysine. Ser649 is subject to Phosphoserine. At Lys652 the chain carries N6-acetyllysine. Lys655 is modified (N6-succinyllysine). The Microbody targeting signal motif lies at 659–661; that stretch reads SKL.

It belongs to the acyl-CoA oxidase family. Homodimer. Interacts with LONP2. FAD is required as a cofactor.

The protein localises to the peroxisome. It catalyses the reaction a 2,3-saturated acyl-CoA + O2 = a (2E)-enoyl-CoA + H2O2. The catalysed reaction is hexadecanoyl-CoA + O2 = (2E)-hexadecenoyl-CoA + H2O2. It carries out the reaction dodecanoyl-CoA + O2 = (2E)-dodecenoyl-CoA + H2O2. The enzyme catalyses octanoyl-CoA + O2 = (2E)-octenoyl-CoA + H2O2. It catalyses the reaction decanoyl-CoA + O2 = (2E)-decenoyl-CoA + H2O2. The catalysed reaction is tetradecanoyl-CoA + O2 = (2E)-tetradecenoyl-CoA + H2O2. It carries out the reaction hexadecanedioyl-CoA + O2 = (2E)-hexadecenedioyl-CoA + H2O2. The enzyme catalyses tetracosanoyl-CoA + O2 = (2E)-tetracosenoyl-CoA + H2O2. It catalyses the reaction glutaryl-CoA + O2 = (2E)-glutaconyl-CoA + H2O2. The catalysed reaction is hexanoyl-CoA + O2 = (2E)-hexenoyl-CoA + H2O2. It carries out the reaction octadecanoyl-CoA + O2 = (2E)-octadecenoyl-CoA + H2O2. The enzyme catalyses (5Z,8Z,11Z,14Z,17Z)-eicosapentaenoyl-CoA + O2 = (2E,5Z,8Z,11Z,14Z,17Z)-icosahexaenoyl-CoA + H2O2. It catalyses the reaction (6Z,9Z,12Z,15Z,18Z,21Z)-tetracosahexaenoyl-CoA + O2 = (2E,6Z,9Z,12Z,15Z,18Z,21Z)-tetracosaheptaenoyl-CoA + H2O2. Its pathway is lipid metabolism; peroxisomal fatty acid beta-oxidation. Functionally, involved in the initial and rate-limiting step of peroxisomal beta-oxidation of straight-chain saturated and unsaturated very-long-chain fatty acids. Catalyzes the desaturation of fatty acyl-CoAs such as palmitoyl-CoA (hexadecanoyl-CoA) to 2-trans-enoyl-CoAs ((2E)-enoyl-CoAs) such as (2E)-hexadecenoyl-CoA, and donates electrons directly to molecular oxygen (O(2)), thereby producing hydrogen peroxide (H(2)O(2)). Isoform 2 shows higher activity with hexadecanoyl-CoA as substrate than isoform 1. In Phascolarctos cinereus (Koala), this protein is Peroxisomal acyl-coenzyme A oxidase 1 (ACOX1).